Here is a 492-residue protein sequence, read N- to C-terminus: Stomatal closure-related actin-binding protein 2 (492 aa).

Residues 112–132 (LKKLRDALETMRGRMDGRNRE) are a coiled coil.

Belongs to the SCAB family. As to expression, expressed in roots, stems, leaves, siliques and flowers.

The protein resides in the cytoplasm. It localises to the cytoskeleton. Its function is as follows. Probable plant-specific actin binding protein that bundles and stabilizes microfilaments (MFs). This chain is Stomatal closure-related actin-binding protein 2, found in Arabidopsis thaliana (Mouse-ear cress).